The sequence spans 217 residues: MSLVGGFPHHPVVHHEGYPFAAAAAAAAAAAASRCSHEENPYFHGWLIGHPEMSPPDYSMALSYSPEYASGAAGLDHSHYGGVPPGAGPPGLGGPRPVKRRGTANRKERRRTQSINSAFAELRECIPNVPADTKLSKIKTLRLATSYIAYLMDLLAKDDQNGEAEAFKAEIKKTDVKEEKRKKELNEILKSTVSSNDKKTKGRTGWPQHVWALELKQ.

A disordered region spans residues 76–116 (DHSHYGGVPPGAGPPGLGGPRPVKRRGTANRKERRRTQSIN). Positions 83–94 (VPPGAGPPGLGG) are enriched in gly residues. Residues 97–112 (PVKRRGTANRKERRRT) are compositionally biased toward basic residues. The region spanning 99–151 (KRRGTANRKERRRTQSINSAFAELRECIPNVPADTKLSKIKTLRLATSYIAYL) is the bHLH domain.

In terms of assembly, efficient DNA binding requires dimerization with another bHLH protein. Forms homodimers and heterodimers with TCF3 gene products E12 and E47, HAND1 and HEY1, HEY2 and HEYL (hairy-related transcription factors).

The protein localises to the nucleus. Essential for cardiac morphogenesis, particularly for the formation of the right ventricle and of the aortic arch arteries. Required for vascular development and regulation of angiogenesis, possibly through a VEGF signaling pathway. Also plays an important role in limb development, particularly in the establishment of anterior-posterior polarization, acting as an upstream regulator of sonic hedgehog (SHH) induction in the limb bud. Is involved in the development of branchial arches, which give rise to unique structures in the head and neck. Binds DNA on E-box consensus sequence 5'-CANNTG-3'. This Rattus norvegicus (Rat) protein is Heart- and neural crest derivatives-expressed protein 2 (Hand2).